Reading from the N-terminus, the 239-residue chain is 2,3,4,5-tetrahydropyridine-2,6-dicarboxylate N-acetyltransferase (239 aa).

It belongs to the transferase hexapeptide repeat family. DapH subfamily.

It catalyses the reaction (S)-2,3,4,5-tetrahydrodipicolinate + acetyl-CoA + H2O = L-2-acetamido-6-oxoheptanedioate + CoA. It participates in amino-acid biosynthesis; L-lysine biosynthesis via DAP pathway; LL-2,6-diaminopimelate from (S)-tetrahydrodipicolinate (acetylase route): step 1/3. In terms of biological role, catalyzes the transfer of an acetyl group from acetyl-CoA to tetrahydrodipicolinate. The sequence is that of 2,3,4,5-tetrahydropyridine-2,6-dicarboxylate N-acetyltransferase from Staphylococcus aureus (strain JH9).